The following is a 323-amino-acid chain: Beta-ketoacyl-[acyl-carrier-protein] synthase III (323 aa).

Active-site residues include C114 and H250. Positions 251 to 255 (QANIR) are ACP-binding. N280 is a catalytic residue.

This sequence belongs to the thiolase-like superfamily. FabH family. As to quaternary structure, homodimer.

It localises to the cytoplasm. The catalysed reaction is malonyl-[ACP] + acetyl-CoA + H(+) = 3-oxobutanoyl-[ACP] + CO2 + CoA. It functions in the pathway lipid metabolism; fatty acid biosynthesis. Its function is as follows. Catalyzes the condensation reaction of fatty acid synthesis by the addition to an acyl acceptor of two carbons from malonyl-ACP. Catalyzes the first condensation reaction which initiates fatty acid synthesis and may therefore play a role in governing the total rate of fatty acid production. Possesses both acetoacetyl-ACP synthase and acetyl transacylase activities. Its substrate specificity determines the biosynthesis of branched-chain and/or straight-chain of fatty acids. The protein is Beta-ketoacyl-[acyl-carrier-protein] synthase III of Ruegeria pomeroyi (strain ATCC 700808 / DSM 15171 / DSS-3) (Silicibacter pomeroyi).